The following is a 194-amino-acid chain: dITP/XTP pyrophosphatase (194 aa).

Threonine 8–lysine 13 provides a ligand contact to substrate. Mg(2+) is bound by residues glutamate 41 and aspartate 70. Aspartate 70 functions as the Proton acceptor in the catalytic mechanism. Substrate is bound by residues serine 71, phenylalanine 153–aspartate 156, lysine 176, and histidine 181–arginine 182.

This sequence belongs to the HAM1 NTPase family. In terms of assembly, homodimer. It depends on Mg(2+) as a cofactor.

It catalyses the reaction XTP + H2O = XMP + diphosphate + H(+). It carries out the reaction dITP + H2O = dIMP + diphosphate + H(+). The catalysed reaction is ITP + H2O = IMP + diphosphate + H(+). Its function is as follows. Pyrophosphatase that catalyzes the hydrolysis of nucleoside triphosphates to their monophosphate derivatives, with a high preference for the non-canonical purine nucleotides XTP (xanthosine triphosphate), dITP (deoxyinosine triphosphate) and ITP. Seems to function as a house-cleaning enzyme that removes non-canonical purine nucleotides from the nucleotide pool, thus preventing their incorporation into DNA/RNA and avoiding chromosomal lesions. The protein is dITP/XTP pyrophosphatase of Halalkalibacterium halodurans (strain ATCC BAA-125 / DSM 18197 / FERM 7344 / JCM 9153 / C-125) (Bacillus halodurans).